Consider the following 212-residue polypeptide: Ribosomal RNA small subunit methyltransferase G (212 aa).

S-adenosyl-L-methionine-binding positions include Gly-80, Leu-85, 131–132 (VE), and Arg-146.

This sequence belongs to the methyltransferase superfamily. RNA methyltransferase RsmG family.

The protein resides in the cytoplasm. It carries out the reaction guanosine(527) in 16S rRNA + S-adenosyl-L-methionine = N(7)-methylguanosine(527) in 16S rRNA + S-adenosyl-L-homocysteine. In terms of biological role, specifically methylates the N7 position of guanine in position 527 of 16S rRNA. The polypeptide is Ribosomal RNA small subunit methyltransferase G (Azoarcus sp. (strain BH72)).